A 210-amino-acid polypeptide reads, in one-letter code: Small ribosomal subunit protein uS7 (210 aa).

The span at Met-1–Gln-22 shows a compositional bias: acidic residues. The segment at Met-1–Glu-23 is disordered.

It belongs to the universal ribosomal protein uS7 family. As to quaternary structure, part of the 30S ribosomal subunit. Contacts proteins S9 and S11.

Functionally, one of the primary rRNA binding proteins, it binds directly to 16S rRNA where it nucleates assembly of the head domain of the 30S subunit. Is located at the subunit interface close to the decoding center. The polypeptide is Small ribosomal subunit protein uS7 (Halobacterium salinarum (strain ATCC 29341 / DSM 671 / R1)).